Here is a 207-residue protein sequence, read N- to C-terminus: Oligoribonuclease (207 aa).

An Exonuclease domain is found at 8 to 172 (LVWIDCEMTG…ADILESVREL (165 aa)). Residue tyrosine 129 is part of the active site.

Belongs to the oligoribonuclease family.

It is found in the cytoplasm. Its function is as follows. 3'-to-5' exoribonuclease specific for small oligoribonucleotides. In Leifsonia xyli subsp. xyli (strain CTCB07), this protein is Oligoribonuclease.